Consider the following 223-residue polypeptide: Virulence transcriptional regulatory protein PhoP (223 aa).

A Response regulatory domain is found at Arg2–Met116. Asp51 bears the 4-aspartylphosphate mark. The segment at residues Ser124–Leu222 is a DNA-binding region (ompR/PhoB-type).

In terms of processing, phosphorylated by PhoQ.

Its subcellular location is the cytoplasm. Member of the two-component regulatory system PhoQ/PhoP involved in virulence and adaptation to low Mg(2+) environments. Necessary for resistance to killing by polymorphonuclear leukocytes (PMNs) and cationic antimicrobial peptides (CAMP) they produce. The chain is Virulence transcriptional regulatory protein PhoP (phoP) from Shigella flexneri.